The sequence spans 148 residues: MKEKIPFYNEKEFNEMMKKTKKGTFSGWYIINPENNSVEFSGSFNRQFKLNKPIIPVNTEYVTRKEFNEYKDSNDQRLIKIETTLTAQGEQINKLTQTVEKQGEQIRELQVEQKAQGEQIKAQGETLKLILQTLQKMSDRLDKIDPPK.

Belongs to the UPF0134 family.

The polypeptide is UPF0134 protein MPN_410 (Mycoplasma pneumoniae (strain ATCC 29342 / M129 / Subtype 1) (Mycoplasmoides pneumoniae)).